The chain runs to 106 residues: MSVNRIQLSGKDILEKDFKTGIRGYSQEEVDEFLDVIIQDYDNFKQEIDRLKAENEKLKKSTPAVEQSRSRSQQPPTSQVNYDVLKRLSNLEKAVFGKRYTEQEES.

Positions 34–67 (LDVIIQDYDNFKQEIDRLKAENEKLKKSTPAVEQ) form a coiled coil. The disordered stretch occupies residues 55-83 (NEKLKKSTPAVEQSRSRSQQPPTSQVNYD). Over residues 70–79 (SRSQQPPTSQ) the composition is skewed to low complexity.

Belongs to the GpsB family. As to quaternary structure, forms polymers through the coiled coil domains. Interacts with PBP1, MreC and EzrA.

It localises to the cytoplasm. Its function is as follows. Divisome component that associates with the complex late in its assembly, after the Z-ring is formed, and is dependent on DivIC and PBP2B for its recruitment to the divisome. Together with EzrA, is a key component of the system that regulates PBP1 localization during cell cycle progression. Its main role could be the removal of PBP1 from the cell pole after pole maturation is completed. Also contributes to the recruitment of PBP1 to the division complex. Not essential for septum formation. This is Cell cycle protein GpsB from Oceanobacillus iheyensis (strain DSM 14371 / CIP 107618 / JCM 11309 / KCTC 3954 / HTE831).